A 710-amino-acid polypeptide reads, in one-letter code: Protein phosphatase 1 regulatory subunit 37 (710 aa).

Residues 1–12 (MEIPPQEAPPGP) are compositionally biased toward pro residues. The disordered stretch occupies residues 1 to 46 (MEIPPQEAPPGPGADADADAEAEEAPAEAGSSSGASPPTDGRLKAA). The span at 16–26 (ADADAEAEEAP) shows a compositional bias: acidic residues. Low complexity predominate over residues 27–38 (AEAGSSSGASPP). S54 and S60 each carry phosphoserine. LRR repeat units follow at residues 224–244 (SLAVLHLENASLSGRPLMLLA), 252–273 (NLQELYLADNKLNGLQDSAQLG), 281–301 (SLQILDLRNNHVLDSGLAYIC), 310–330 (GLVTLVLWNNQLTHTGMAFLG), and 338–358 (SLETLNLGHNPIGNEGVRNLK). A disordered region spans residues 487–677 (PLEESGDLPA…APPGLEAKGS (191 aa)). Over residues 512 to 531 (SDSDSDSDREEQEEEEEDQS) the composition is skewed to acidic residues. A compositionally biased stretch (low complexity) spans 543–565 (SSSAPCPALLPSTDSLGPGDKSP). S581 is subject to Phosphoserine. Residues 603 to 624 (PPVPPTSVSSPPPSPPSPPASP) show a composition bias toward pro residues. Residues 637–649 (SEAQPQTEPSQAG) show a composition bias toward polar residues. Positions 656–676 (LKPEFALALAPEAPPGLEAKG) are enriched in low complexity.

This sequence belongs to the PPP1R37 family. In terms of assembly, interacts with PPP1CA.

Inhibits phosphatase activity of protein phosphatase 1 (PP1) complexes. In Rattus norvegicus (Rat), this protein is Protein phosphatase 1 regulatory subunit 37 (Ppp1r37).